Here is a 530-residue protein sequence, read N- to C-terminus: MTDAMFSSSAKPHFIKPMLPGFETYIVIPKAFYSNYLEGRQEGNAAELRSDATEITWKIKIDGRRMTKGWEEFAVAHNLQVDDILVFRHEGNLLFHVTPFGLSFCEILYSQRDEKDVKDTTGKVTRSRTVKKNGKNECSSVDTDFVVPVTASNQRVDSFYLPRGFTTSSGSSKLCNEIILIDEKDRPSTLKLRYNKSSNRFCVSRGWRAFCCRNGYRTGCFLRIILVRKGKTPVLRIFPLERDEDNIEKHSKKVKQEVEHEESVKEETNVESGKLKRDRLLQKDPKNLCSTSQDTNFVVPVTASNQRHDSFHLPKGLTTSSGLSKLCKKIIFMDQKGRSSILDLSYSISDDRFTVRRGWKAFCCRNEHKTGCFLRLILVQNGKTPVLRIFPLERYENSIAKNSKKIKQEVEYESAKEEKNLESLSLSDNSSFVVSVTVSNLSEDILHLPIRLSRSNLLDKKIHEIVLMNKEGRTWILSLKYSKYSGRFRITRGWKSFCEANGQKPGCTFLLKLHLSMTRFDQDGVAWDKK.

DNA-binding regions (TF-B3) lie at residues 11–103 (KPHF…FGLS) and 144–241 (DFVV…FPLE). The interval 251–276 (SKKVKQEVEHEESVKEETNVESGKLK) is disordered. The span at 254-276 (VKQEVEHEESVKEETNVESGKLK) shows a compositional bias: basic and acidic residues. DNA-binding regions (TF-B3) lie at residues 296–393 (NFVV…FPLE) and 431–530 (SFVV…WDKK).

The protein localises to the nucleus. This Arabidopsis thaliana (Mouse-ear cress) protein is B3 domain-containing protein REM-like 3.